The primary structure comprises 405 residues: NADH-quinone oxidoreductase subunit D (405 aa).

Belongs to the complex I 49 kDa subunit family. As to quaternary structure, NDH-1 is composed of 14 different subunits. Subunits NuoB, C, D, E, F, and G constitute the peripheral sector of the complex.

It is found in the cell inner membrane. It carries out the reaction a quinone + NADH + 5 H(+)(in) = a quinol + NAD(+) + 4 H(+)(out). Functionally, NDH-1 shuttles electrons from NADH, via FMN and iron-sulfur (Fe-S) centers, to quinones in the respiratory chain. The immediate electron acceptor for the enzyme in this species is believed to be ubiquinone. Couples the redox reaction to proton translocation (for every two electrons transferred, four hydrogen ions are translocated across the cytoplasmic membrane), and thus conserves the redox energy in a proton gradient. The polypeptide is NADH-quinone oxidoreductase subunit D (Sphingopyxis alaskensis (strain DSM 13593 / LMG 18877 / RB2256) (Sphingomonas alaskensis)).